We begin with the raw amino-acid sequence, 887 residues long: Semaphorin-6B (887 aa).

The signal sequence occupies residues 1–26 (MWTPRAPPPRPALLFLLLLLLRVTHG). The Extracellular segment spans residues 27-605 (LFPDEPPPLS…VSVNLLVTSS (579 aa)). The region spanning 32–525 (PPPLSVAPRD…FPRCVVRVPV (494 aa)) is the Sema domain. The N-linked (GlcNAc...) asparagine glycan is linked to Asn75. 2 cysteine pairs are disulfide-bonded: Cys117-Cys127 and Cys145-Cys154. N-linked (GlcNAc...) asparagine glycosylation is found at Asn156, Asn168, and Asn292. Cystine bridges form between Cys268–Cys379 and Cys293–Cys338. Asn387, Asn442, and Asn463 each carry an N-linked (GlcNAc...) asparagine glycan. 4 cysteine pairs are disulfide-bonded: Cys487-Cys519, Cys528-Cys546, Cys534-Cys580, and Cys538-Cys554. Residues 606–626 (VAAFVVGAVVSGFSVGWFVGL) traverse the membrane as a helical segment. Residues 627 to 887 (RERRELARRK…TGERTAPPVP (261 aa)) are Cytoplasmic-facing. Disordered stretches follow at residues 656 to 675 (LGERRGTGTGGRGGAGGGPG), 697 to 717 (HGGPHDLDSGLLPTPEQTPLP), and 759 to 887 (APEQ…PPVP). Residues 662-674 (TGTGGRGGAGGGP) show a composition bias toward gly residues. Arg667 carries the omega-N-methylarginine modification. The segment covering 707–717 (LLPTPEQTPLP) has biased composition (low complexity).

It belongs to the semaphorin family.

It is found in the cell membrane. Functions as a cell surface repellent for mossy fibers of developing neurons in the hippocampus where it plays a role in axon guidance. May function through the PLXNA4 receptor expressed by mossy cell axons. In Rattus norvegicus (Rat), this protein is Semaphorin-6B (Sema6b).